The chain runs to 678 residues: Protein distal antenna (678 aa).

The region spanning 7–58 is the HTH psq-type domain; it reads TKGKRPLRSLTPRDKIHAIQRIHDGESKASVARDIGVPESTLRGWCKNEDKL. The segment at residues 34 to 54 is a DNA-binding region (H-T-H motif); sequence KASVARDIGVPESTLRGWCKN. Disordered stretches follow at residues 232 to 310, 344 to 381, 445 to 528, 541 to 592, and 645 to 678; these read GAGN…GGPM, GVTSPPIRSSTPQHMSQLAQTPPIPSAPLTPSSTPSGS, KETE…TSEC, GMEA…DEEE, and NETPMIEKSALPEDSEEHAAEEEGSGRGKSRRRK. Polar residues-rich tracts occupy residues 241 to 254 and 349 to 363; these read PSGQTPLQVQSPRS and PIRSSTPQHMSQLAQ. Phosphoserine is present on residues Ser-251 and Ser-254. Residues 372–381 show a composition bias toward low complexity; the sequence is LTPSSTPSGS. Positions 449 to 461 are enriched in polar residues; it reads TPSVRSLSSNEQN. Over residues 462–478 the composition is skewed to acidic residues; it reads PEADEATETDLDGEVEP. A compositionally biased stretch (polar residues) spans 495 to 508; the sequence is TPSQSPIAHSSGSR. Low complexity predominate over residues 570-586; sequence NNNDVSASNNNNNNNSN. Positions 657 to 667 are enriched in acidic residues; it reads EDSEEHAAEEE.

As to quaternary structure, homomers. Interacts with itself, danr, ey and dac to form a complex (or complexes) containing the RD factors. Coexpressed with danr in the presumptive distal antenna, but not in the leg imaginal disk. Both proteins are also expressed in the brain and the eye region of the eye-antenna disk. First detected in early L3 eye disks in cells surrounding the newly initiated MF. Levels are uniform and high anterior to the furrow, lower levels within and posterior to the furrow. Limited expression is seen in small groups of cells in leg and wing. These appear in the location of prominent sense organ progenitors at relatively late stages of disk development.

It localises to the nucleus. Functionally, probable transcription factor with a role in the retinal determination (RD) network. Regulates ato expression and is required for normal R8 induction and differentiation. Danr appears to repress Dan expression, but Dan is required for Danr expression anterior to the morphogenetic furrow (MF). Dan and Danr lie downstream of so and require dac function for highest levels of expression. Contributes to differentiation of antenna-specific characteristics; effector gene that acts downstream of homothorax (hth), Distal-less (Dll), cut (ct) and spineless (ss) genes to control differentiation of distal antennal structures. The chain is Protein distal antenna from Drosophila melanogaster (Fruit fly).